We begin with the raw amino-acid sequence, 422 residues long: UPF0229 protein SO_2883 (422 aa).

The interval 60-111 (SEPMFHQGKGGVRDRVHPGNDQFTRGDKIDRPQGGSGGGAGKGDASDSGEGN) is disordered. A compositionally biased stretch (basic and acidic residues) spans 70-90 (GVRDRVHPGNDQFTRGDKIDR).

This sequence belongs to the UPF0229 family.

The sequence is that of UPF0229 protein SO_2883 from Shewanella oneidensis (strain ATCC 700550 / JCM 31522 / CIP 106686 / LMG 19005 / NCIMB 14063 / MR-1).